The following is a 295-amino-acid chain: Acetylglutamate kinase (295 aa).

Substrate is bound by residues 66–67 (GG), R88, and N193.

The protein belongs to the acetylglutamate kinase family. ArgB subfamily.

Its subcellular location is the cytoplasm. It catalyses the reaction N-acetyl-L-glutamate + ATP = N-acetyl-L-glutamyl 5-phosphate + ADP. The protein operates within amino-acid biosynthesis; L-arginine biosynthesis; N(2)-acetyl-L-ornithine from L-glutamate: step 2/4. Functionally, catalyzes the ATP-dependent phosphorylation of N-acetyl-L-glutamate. This is Acetylglutamate kinase from Afipia carboxidovorans (strain ATCC 49405 / DSM 1227 / KCTC 32145 / OM5) (Oligotropha carboxidovorans).